Reading from the N-terminus, the 120-residue chain is Large ribosomal subunit protein eL34 (120 aa).

The protein belongs to the eukaryotic ribosomal protein eL34 family.

The sequence is that of Large ribosomal subunit protein eL34 (RPL34) from Nicotiana tabacum (Common tobacco).